Here is a 554-residue protein sequence, read N- to C-terminus: Probable oligo-1,6-glucosidase 3 (554 aa).

Aspartate 199 acts as the Nucleophile in catalysis. Glutamate 256 (proton donor) is an active-site residue.

This sequence belongs to the glycosyl hydrolase 13 family.

It is found in the cytoplasm. The catalysed reaction is Hydrolysis of (1-&gt;6)-alpha-D-glucosidic linkages in some oligosaccharides produced from starch and glycogen by alpha-amylase, and in isomaltose.. The chain is Probable oligo-1,6-glucosidase 3 (yugT) from Bacillus subtilis (strain 168).